A 409-amino-acid chain; its full sequence is MLDILLFSLYFFFEPVLFFFFMVVFGFVALNNYSWLGCFYFFDSFSFILLIVMSLFILGVVLLSESNFMLLLLSEVLVVVCVFFFVPSNVILMYMYFELSMFPILVMILGYGSQIEKINSSYYLIFYAALCSFPFLFVYFKSFFFISLVYFDFNLSWEMVFVLSLSFMMKFPVYFLHLWLPKAHVEAPTTASMLLAGLLLKLGTAGFLRILGCLSFVHNNVWIVLAFLGMILASFCCMFQSDAKALAAYSSITHMSFVLMALVFIIMSGKTGGVILMLAHGYTSTLMFYLVGEFYHVSGSRMVYYMSSFFGSGMIMALLFAVVFLSNMGTPPSLSFLSEFIVISSSLNMMKFSFWVLFVYFFSAFYYSIYLLTSSVMGKGYVNFSIWNVGFSVPLVFMMYNIFWMSVFF.

The next 13 membrane-spanning stretches (helical) occupy residues 9 to 29 (LYFF…GFVA), 44 to 64 (SFSF…VLLS), 68 to 88 (FMLL…FVPS), 90 to 110 (VILM…MILG), 125 to 145 (IFYA…SFFF), 160 to 180 (VFVL…HLWL), 194 to 214 (LLAG…LGCL), 221 to 241 (VWIV…MFQS), 246 to 268 (LAAY…IIMS), 273 to 295 (GVIL…GEFY), 305 to 325 (YMSS…VVFL), 352 to 372 (FSFW…IYLL), and 389 to 409 (VGFS…SVFF).

It belongs to the complex I subunit 4 family.

Its subcellular location is the mitochondrion membrane. The catalysed reaction is a ubiquinone + NADH + 5 H(+)(in) = a ubiquinol + NAD(+) + 4 H(+)(out). Functionally, core subunit of the mitochondrial membrane respiratory chain NADH dehydrogenase (Complex I) that is believed to belong to the minimal assembly required for catalysis. Complex I functions in the transfer of electrons from NADH to the respiratory chain. The immediate electron acceptor for the enzyme is believed to be ubiquinone. This chain is NADH-ubiquinone oxidoreductase chain 4 (ND4), found in Ascaris suum (Pig roundworm).